Consider the following 476-residue polypeptide: ATP synthase subunit beta (476 aa).

153–160 (GGAGVGKT) provides a ligand contact to ATP.

Belongs to the ATPase alpha/beta chains family. As to quaternary structure, F-type ATPases have 2 components, CF(1) - the catalytic core - and CF(0) - the membrane proton channel. CF(1) has five subunits: alpha(3), beta(3), gamma(1), delta(1), epsilon(1). CF(0) has three main subunits: a(1), b(2) and c(9-12). The alpha and beta chains form an alternating ring which encloses part of the gamma chain. CF(1) is attached to CF(0) by a central stalk formed by the gamma and epsilon chains, while a peripheral stalk is formed by the delta and b chains.

The protein localises to the cell membrane. It catalyses the reaction ATP + H2O + 4 H(+)(in) = ADP + phosphate + 5 H(+)(out). Its function is as follows. Produces ATP from ADP in the presence of a proton gradient across the membrane. The catalytic sites are hosted primarily by the beta subunits. The sequence is that of ATP synthase subunit beta from Latilactobacillus sakei subsp. sakei (strain 23K) (Lactobacillus sakei subsp. sakei).